A 283-amino-acid chain; its full sequence is Protein BASIC PENTACYSTEINE5 (283 aa).

Residues 51–86 form an alanine-zipper region; that stretch reads AVKERNEAVAATKEALASRDEALEQRDKALSERDNA. The stretch at 63–89 forms a coiled coil; that stretch reads KEALASRDEALEQRDKALSERDNAIME. Residues 122–176 form a disordered region; the sequence is EESHLPNPSPISTIPPEAANTRPTKRKKESKQGKKMGEDLNRPVASPGKKSRKDW. The span at 151–162 shows a compositional bias: basic and acidic residues; it reads SKQGKKMGEDLN.

Belongs to the BBR/BPC family. Homodimer. Heterodimer. As to expression, expressed in seedlings, leaves and pistils.

The protein localises to the nucleus. Transcriptional regulator that specifically binds to GA-rich elements (GAGA-repeats) present in regulatory sequences of genes involved in developmental processes. In Arabidopsis thaliana (Mouse-ear cress), this protein is Protein BASIC PENTACYSTEINE5 (BPC5).